Reading from the N-terminus, the 135-residue chain is Peptide methionine sulfoxide reductase MsrB (135 aa).

The 123-residue stretch at 9–131 (DDYWRSKLTD…NSASIQFEEE (123 aa)) folds into the MsrB domain. Residues Cys-48, Cys-51, Cys-97, and Cys-100 each coordinate Zn(2+). The active-site Nucleophile is Cys-120.

Belongs to the MsrB Met sulfoxide reductase family. Requires Zn(2+) as cofactor.

The enzyme catalyses L-methionyl-[protein] + [thioredoxin]-disulfide + H2O = L-methionyl-(R)-S-oxide-[protein] + [thioredoxin]-dithiol. The sequence is that of Peptide methionine sulfoxide reductase MsrB from Teredinibacter turnerae (strain ATCC 39867 / T7901).